The chain runs to 310 residues: Olfactory receptor 10G2 (310 aa).

At 1–29 (MGKTKNTSLDAVVTDFILLGLSHPPNLRS) the chain is on the extracellular side. A glycan (N-linked (GlcNAc...) asparagine) is linked at Asn6. A helical membrane pass occupies residues 30–50 (LLFLVFFIIYILTQLGNLLIL). The Cytoplasmic portion of the chain corresponds to 51–58 (LTMWADPK). Residues 59–80 (LCARPMYILLGVLSFLDMWLSS) traverse the membrane as a helical segment. The Extracellular portion of the chain corresponds to 81–104 (VTVPLLILDFTPSIKAIPFGGCVA). The cysteines at positions 102 and 194 are disulfide-linked. A helical membrane pass occupies residues 105 to 125 (QLYFFHFLGSTQCFLYTLMAY). Residues 126–144 (DRYLAICQPLRYPVLMNGR) lie on the Cytoplasmic side of the membrane. The helical transmembrane segment at 145-165 (LCTVLVAGAWVAGSMHGSIQA) threads the bilayer. Topologically, residues 166–202 (TLTFRLPYCGPNQVDYFICDIPAVLRLACADTTVNEL) are extracellular. Residues 203-222 (VTFVDVGVVAASCFMLILLS) form a helical membrane-spanning segment. The Cytoplasmic segment spans residues 223-242 (YANIVNAILKIRTTDGRRRA). Residues 243–263 (FSTCGSHLIVVTVYYVPCIFI) form a helical membrane-spanning segment. The Extracellular portion of the chain corresponds to 264-274 (YLRAGSKDPLD). Residues 275–295 (GAAAVFYTVVTPLLNPLIYTL) traverse the membrane as a helical segment. Topologically, residues 296-310 (RNQEVKSALKRITAG) are cytoplasmic.

Belongs to the G-protein coupled receptor 1 family.

It localises to the cell membrane. Odorant receptor. This Homo sapiens (Human) protein is Olfactory receptor 10G2 (OR10G2).